The primary structure comprises 1191 residues: Serine/threonine-protein kinase dkf-2 (1191 aa).

Disordered stretches follow at residues 11 to 48 (YTSMPSSSTSNHRIDRLSSSSSSTFRRDDFRRHSTTTS) and 108 to 155 (MLSR…GGHV). Positions 123–139 (TPDDHYSNPSDKRREVP) are enriched in basic and acidic residues. Positions 140–150 (SIRSTSSNSSS) are enriched in low complexity. 2 consecutive Phorbol-ester/DAG-type zinc fingers follow at residues 314–364 (PHTL…PNNC) and 466–531 (PHTF…AKDC). A disordered region spans residues 549-594 (VSEDRDDDLSLRSGSGGHKKAQNTPSAPLQGSEGSGSPGGAVVSFA). Residues 632 to 713 (LLKEGWIVHY…VYFVYSSLTD (82 aa)) form the PH domain. A disordered region spans residues 730–786 (PSTVSSTDSGYLGSSGASSSCVRSREGSTVSSTITVDRTRRGGSTTSTENSEAESES). The span at 738–751 (SGYLGSSGASSSCV) shows a compositional bias: low complexity. Residues 756 to 765 (GSTVSSTITV) show a composition bias toward polar residues. Over residues 773–786 (STTSTENSEAESES) the composition is skewed to low complexity. The region spanning 891–1147 (IFAEEVLGSG…VAKAQSHIWM (257 aa)) is the Protein kinase domain. ATP contacts are provided by residues 897–905 (LGSGQFGTV) and lysine 920. The Proton acceptor role is filled by aspartate 1014. Residues serine 1046 and serine 1050 each carry the phosphoserine modification.

Belongs to the protein kinase superfamily. CAMK Ser/Thr protein kinase family. PKD subfamily. Mg(2+) serves as cofactor. Phosphorylation on Ser-1046 is the dominant regulator of catalysis, phosphorylation on Ser-1050 has a lesser effect. Prolonged phosphorylation results in ubiquitination and degradation.

The protein resides in the cytoplasm. Its subcellular location is the membrane. It catalyses the reaction L-seryl-[protein] + ATP = O-phospho-L-seryl-[protein] + ADP + H(+). The enzyme catalyses L-threonyl-[protein] + ATP = O-phospho-L-threonyl-[protein] + ADP + H(+). Activated by DAG and phorbol esters. Phorbol-ester/DAG-type domain 1 binds phorbol ester with low affinity. Phorbol-ester/DAG-type domain 2 binds phorbol ester with high affinity and targets the kinase to the cell periphery, enabling phosphorylation and activation by colocalized tpa-1. Both domains 1 and 2 appear to bind DAG with equal affinity so may contribute equally to translocation and activation. In terms of biological role, converts transient diacylglycerol (DAG) signals into prolonged physiological effects, downstream of PKC. Acts in the intestine to regulate both innate immunity by promoting activation of pmk-1 and also stress response and life span by acting as an upstream, negative regulator of the daf-16 transcription factor. This is Serine/threonine-protein kinase dkf-2 from Caenorhabditis briggsae.